A 111-amino-acid polypeptide reads, in one-letter code: MKMLHQVLIACVIGGIMGILGHVKKRGRLEKPRMTKRFIYLGFLEDWFIGMTASILLVLSADPDSGIQLVILSIISGYGGEAVLRSFDFVRELNSGGEPAESKRQTKTPPE.

3 helical membrane-spanning segments follow: residues 4-23 (LHQV…LGHV), 39-61 (IYLG…VLSA), and 65-84 (SGIQ…EAVL).

It localises to the cell membrane. This is an uncharacterized protein from Bacillus subtilis (strain 168).